The primary structure comprises 159 residues: Small ribosomal subunit protein uS17 (159 aa).

This sequence belongs to the universal ribosomal protein uS17 family.

This is Small ribosomal subunit protein uS17 (RPS11) from Euphorbia esula (Leafy spurge).